We begin with the raw amino-acid sequence, 123 residues long: Large ribosomal subunit protein mL52 (123 aa).

The N-terminal 23 residues, Met1–Ala23, are a transit peptide targeting the mitochondrion. The segment covering Gln99–Leu109 has biased composition (basic and acidic residues). A disordered region spans residues Gln99–Gln123.

This sequence belongs to the mitochondrion-specific ribosomal protein mL52 family. In terms of assembly, component of the mitochondrial large ribosomal subunit (mt-LSU). Mature mammalian 55S mitochondrial ribosomes consist of a small (28S) and a large (39S) subunit. The 28S small subunit contains a 12S ribosomal RNA (12S mt-rRNA) and 30 different proteins. The 39S large subunit contains a 16S rRNA (16S mt-rRNA), a copy of mitochondrial valine transfer RNA (mt-tRNA(Val)), which plays an integral structural role, and 52 different proteins. mL52 connects the central protuberance to the body of the ribosome.

The protein resides in the mitochondrion. In Homo sapiens (Human), this protein is Large ribosomal subunit protein mL52 (MRPL52).